A 626-amino-acid chain; its full sequence is Dual specificity testis-specific protein kinase 1 (626 aa).

A disordered region spans residues 1 to 41; that stretch reads MAGERPPLRGPGPGPGEVPGEGPPGPGGTGGGPGRGRPSSY. Residues 8-26 show a composition bias toward pro residues; it reads LRGPGPGPGEVPGEGPPGP. Residues 57–314 enclose the Protein kinase domain; that stretch reads FHCAEKIGAG…TEITQHLEWI (258 aa). Residues 63-71 and K86 contribute to the ATP site; that span reads IGAGFFSEV. D175 serves as the catalytic Proton acceptor. Phosphoserine; by autocatalysis is present on S220. Disordered stretches follow at residues 331-373, 423-488, and 529-564; these read HNQG…NWGD, ETLV…QLPL, and WAGE…EPDE. Residue R338 is modified to Omega-N-methylarginine. A compositionally biased stretch (basic and acidic residues) spans 348-357; sequence PDPRLSRSRS. Residues 419–524 form a required for interaction with YWHAB region; it reads VTTPETLVQP…NNNPPAVVVN (106 aa). A compositionally biased stretch (pro residues) spans 476–485; that stretch reads EPEPPGPAPQ. The segment at 527–624 is required for interaction with PARVA; that stretch reads QGWAGEPWNR…PTPSLQLPGA (98 aa). The required for interaction with SPRED1 and SPRY2. Required for TESK1-mediated dephosphorylation of SPRY2 and SPRY2 inhibition of ERK phosphorylation stretch occupies residues 527–626; that stretch reads QGWAGEPWNR…PSLQLPGARS (100 aa).

It belongs to the protein kinase superfamily. TKL Ser/Thr protein kinase family. Interacts (via both C- and N-termini) with SPRY4 (via C-terminus); the interaction inhibits TESK1 kinase activity. Interacts with TAOK1; the interaction inhibits TAOK1 kinase activity. Interacts (via C-terminus) with SPRED1 (via C-terminus); the interaction inhibits TESK1 kinase activity. Interacts (via C-terminus) with PARVA/PARVIN (via C-terminus); the interaction inhibits TESK1 kinase activity. Interacts with YWHAB/14-3-3 beta; the interaction is dependent on the phosphorylation of TESK1 Ser-437 and inhibits TESK1 kinase activity. Interacts with SPRY1, SPRY3 and SPRED2. Interacts (via C-terminus) with SPRY2 (via C-terminus); the interaction disrupts SPRY2 interaction with PPP2CA/PP2A-C, possibly by vesicular sequestration of SPRY2. Therefore dephosphorylation of SPRY2 by the serine/threonine-protein phosphatase 2A (PP2A) holoenzyme is lost, inhibiting its interaction with GRB2. Mg(2+) serves as cofactor. Requires Mn(2+) as cofactor. In terms of processing, autophosphorylated on serine and tyrosine residues. As to expression, expressed in podocytes and renal tubular cells in the kidney (at protein level).

It localises to the cytoplasm. It is found in the perinuclear region. Its subcellular location is the cytoskeleton. The protein resides in the microtubule organizing center. The protein localises to the centrosome. It localises to the cell projection. It is found in the lamellipodium. It carries out the reaction L-seryl-[protein] + ATP = O-phospho-L-seryl-[protein] + ADP + H(+). The catalysed reaction is L-threonyl-[protein] + ATP = O-phospho-L-threonyl-[protein] + ADP + H(+). The enzyme catalyses L-tyrosyl-[protein] + ATP = O-phospho-L-tyrosyl-[protein] + ADP + H(+). Activated by autophosphorylation on Ser-220. Kinase activity is inhibited by SPRED1. Functionally, dual specificity protein kinase activity catalyzing autophosphorylation and phosphorylation of exogenous substrates on both serine/threonine and tyrosine residues. Regulates the cellular cytoskeleton by enhancing actin stress fiber formation via phosphorylation of cofilin and by preventing microtubule breakdown via inhibition of TAOK1/MARKK kinase activity. Inhibits podocyte motility via regulation of actin cytoskeletal dynamics and phosphorylation of CFL1. Positively regulates integrin-mediated cell spreading, via phosphorylation of cofilin. Suppresses ciliogenesis via multiple pathways; phosphorylation of CFL1, suppression of ciliary vesicle directional trafficking to the ciliary base, and by facilitating YAP1 nuclear localization where it acts as a transcriptional corepressor of the TEAD4 target genes AURKA and PLK1. Probably plays a central role at and after the meiotic phase of spermatogenesis. The sequence is that of Dual specificity testis-specific protein kinase 1 (TESK1) from Homo sapiens (Human).